Reading from the N-terminus, the 325-residue chain is Glutarate 2-hydroxylase (325 aa).

3 residues coordinate Fe cation: His-160, Asp-162, and His-292.

It belongs to the glutarate hydroxylase family. In terms of assembly, homotetramer. Fe(2+) serves as cofactor.

It carries out the reaction glutarate + 2-oxoglutarate + O2 = (S)-2-hydroxyglutarate + succinate + CO2. Its pathway is amino-acid degradation. Its function is as follows. Acts as an alpha-ketoglutarate-dependent dioxygenase catalyzing hydroxylation of glutarate (GA) to L-2-hydroxyglutarate (L2HG). Functions in a L-lysine degradation pathway that proceeds via cadaverine, glutarate and L-2-hydroxyglutarate. The chain is Glutarate 2-hydroxylase from Escherichia coli O17:K52:H18 (strain UMN026 / ExPEC).